A 118-amino-acid polypeptide reads, in one-letter code: NADH-ubiquinone oxidoreductase chain 3 (118 aa).

Helical transmembrane passes span Ile-9–Ala-29, Leu-62–Val-82, and Ile-87–Leu-107.

This sequence belongs to the complex I subunit 3 family.

It is found in the mitochondrion membrane. It carries out the reaction a ubiquinone + NADH + 5 H(+)(in) = a ubiquinol + NAD(+) + 4 H(+)(out). In terms of biological role, core subunit of the mitochondrial membrane respiratory chain NADH dehydrogenase (Complex I) that is believed to belong to the minimal assembly required for catalysis. Complex I functions in the transfer of electrons from NADH to the respiratory chain. The immediate electron acceptor for the enzyme is believed to be ubiquinone. This Pinus sylvestris (Scotch pine) protein is NADH-ubiquinone oxidoreductase chain 3 (NAD3).